We begin with the raw amino-acid sequence, 374 residues long: DNA replication and repair protein RecF (374 aa).

Residue 30-37 coordinates ATP; the sequence is GENAQGKT.

Belongs to the RecF family.

The protein localises to the cytoplasm. Its function is as follows. The RecF protein is involved in DNA metabolism; it is required for DNA replication and normal SOS inducibility. RecF binds preferentially to single-stranded, linear DNA. It also seems to bind ATP. The chain is DNA replication and repair protein RecF from Geobacillus sp. (strain WCH70).